A 1087-amino-acid chain; its full sequence is Collagen alpha-2(I) chain (1087 aa).

Residues A1–V931 are disordered. Low complexity-rich tracts occupy residues E83–P120, E150–P159, and P166–P187. Residues F189–Q199 show a composition bias toward pro residues. The span at P201 to A211 shows a compositional bias: low complexity. The span at G218–G227 shows a compositional bias: gly residues. Low complexity-rich tracts occupy residues E228–Q241, A278–S321, P335–P345, K360–T384, and Q396–P408. Gly residues predominate over residues G409–G418. Residues N443 to Q453 are compositionally biased toward low complexity. A compositionally biased stretch (gly residues) spans G466–G493. A compositionally biased stretch (basic and acidic residues) spans K504–P515. Low complexity-rich tracts occupy residues P560 to R602, F613 to K640, and P677 to Q695. A compositionally biased stretch (gly residues) spans G708 to G717. 2 stretches are compositionally biased toward low complexity: residues E718 to P740 and P776 to P788. Residues G792–G812 show a composition bias toward gly residues. Positions A813 to P828 are enriched in low complexity. The span at R829–L843 shows a compositional bias: basic and acidic residues. Composition is skewed to low complexity over residues L849–N868 and A897–P909. The segment covering A910–P924 has biased composition (pro residues). A Fibrillar collagen NC1 domain is found at Y929 to K1087.

This sequence belongs to the fibrillar collagen family.

It is found in the secreted. It localises to the extracellular space. The protein resides in the extracellular matrix. In Epinephelus costae (Goldblotch grouper), this protein is Collagen alpha-2(I) chain.